The chain runs to 485 residues: GlcNAc-binding protein A (485 aa).

An N-terminal signal peptide occupies residues 1–29 (MKKQPQKTLLAIALSVVSGTAMSHGYVSA). The region spanning 30–200 (VENGVAEARV…SFYNVIDVKF (171 aa)) is the Chitin-binding type-4 domain. The region spanning 437 to 478 (AGTKVLASDGAIYQCKPFPYSGYCVQWTPTATQYQPGTGSHW) is the Chitin-binding type-3 domain.

Belongs to the GbpA family.

The protein localises to the secreted. Its function is as follows. Probably interacts with GlcNAc residues. May promote attachment to both epithelial cell surfaces and chitin. This Vibrio vulnificus (strain YJ016) protein is GlcNAc-binding protein A.